Consider the following 63-residue polypeptide: Metallothionein-2 (63 aa).

Residues 1–30 (MDPQDCTCAAGDSCSCAGSCKCKNCRCQSC) are beta. Residues C6, C8, C14, C16, C20, C22, C25, C27, C30, C34, C35, C37, C38, C42, C45, C49, C51, C59, C61, and C62 each coordinate a divalent metal cation. Residues 31–63 (RKSCCSCCPASCSNCAKGCVCKEPSSSKCSCCH) are alpha.

It belongs to the metallothionein superfamily. Type 1 family.

Functionally, metallothioneins have a high content of cysteine residues that bind various heavy metals. This chain is Metallothionein-2, found in Columba livia (Rock dove).